The chain runs to 505 residues: Deoxyguanosinetriphosphate triphosphohydrolase (505 aa).

Positions 66–273 constitute an HD domain; it reads RLTHSMEVQQ…MEAADDISYC (208 aa).

This sequence belongs to the dGTPase family. Type 1 subfamily. In terms of assembly, homotetramer. The cofactor is Mg(2+).

It carries out the reaction dGTP + H2O = 2'-deoxyguanosine + triphosphate + H(+). Functionally, dGTPase preferentially hydrolyzes dGTP over the other canonical NTPs. The chain is Deoxyguanosinetriphosphate triphosphohydrolase from Escherichia coli O81 (strain ED1a).